The primary structure comprises 454 residues: Bifunctional protein GlmU (454 aa).

A pyrophosphorylase region spans residues 1–226 (MALNVVILAA…AVEVEGANNR (226 aa)). UDP-N-acetyl-alpha-D-glucosamine-binding positions include 8-11 (LAAG), Lys22, Gln73, 78-79 (GT), 100-102 (YGD), Gly137, Glu151, Asn166, and Asn224. Asp102 is a binding site for Mg(2+). Asn224 lines the Mg(2+) pocket. Residues 227–247 (VQLAQLERAYQARAAEKLMLE) are linker. The N-acetyltransferase stretch occupies residues 248–454 (GANLRDPARI…GWPRPVKLKK (207 aa)). UDP-N-acetyl-alpha-D-glucosamine contacts are provided by Arg330 and Lys348. The active-site Proton acceptor is the His360. 2 residues coordinate UDP-N-acetyl-alpha-D-glucosamine: Tyr363 and Asn374. Residues Ala377, 383-384 (NY), Ser402, Ala420, and Arg437 each bind acetyl-CoA.

It in the N-terminal section; belongs to the N-acetylglucosamine-1-phosphate uridyltransferase family. This sequence in the C-terminal section; belongs to the transferase hexapeptide repeat family. Homotrimer. Mg(2+) serves as cofactor.

Its subcellular location is the cytoplasm. The catalysed reaction is alpha-D-glucosamine 1-phosphate + acetyl-CoA = N-acetyl-alpha-D-glucosamine 1-phosphate + CoA + H(+). It catalyses the reaction N-acetyl-alpha-D-glucosamine 1-phosphate + UTP + H(+) = UDP-N-acetyl-alpha-D-glucosamine + diphosphate. The protein operates within nucleotide-sugar biosynthesis; UDP-N-acetyl-alpha-D-glucosamine biosynthesis; N-acetyl-alpha-D-glucosamine 1-phosphate from alpha-D-glucosamine 6-phosphate (route II): step 2/2. It functions in the pathway nucleotide-sugar biosynthesis; UDP-N-acetyl-alpha-D-glucosamine biosynthesis; UDP-N-acetyl-alpha-D-glucosamine from N-acetyl-alpha-D-glucosamine 1-phosphate: step 1/1. It participates in bacterial outer membrane biogenesis; LPS lipid A biosynthesis. Its function is as follows. Catalyzes the last two sequential reactions in the de novo biosynthetic pathway for UDP-N-acetylglucosamine (UDP-GlcNAc). The C-terminal domain catalyzes the transfer of acetyl group from acetyl coenzyme A to glucosamine-1-phosphate (GlcN-1-P) to produce N-acetylglucosamine-1-phosphate (GlcNAc-1-P), which is converted into UDP-GlcNAc by the transfer of uridine 5-monophosphate (from uridine 5-triphosphate), a reaction catalyzed by the N-terminal domain. The chain is Bifunctional protein GlmU from Shewanella pealeana (strain ATCC 700345 / ANG-SQ1).